The sequence spans 373 residues: Eukaryotic translation initiation factor 3 subunit M (373 aa).

Residue serine 2 is modified to N-acetylserine. Residues serine 2 and serine 152 each carry the phosphoserine modification. A PCI domain is found at 180–338 (AASKVMVELL…RKVVVSHSTH (159 aa)). N6-acetyllysine is present on lysine 253. Serine 366 carries the post-translational modification Phosphoserine.

The protein belongs to the eIF-3 subunit M family. As to quaternary structure, component of the eukaryotic translation initiation factor 3 (eIF-3) complex, which is composed of 13 subunits: EIF3A, EIF3B, EIF3C, EIF3D, EIF3E, EIF3F, EIF3G, EIF3H, EIF3I, EIF3J, EIF3K, EIF3L and EIF3M. The eIF-3 complex appears to include 3 stable modules: module A is composed of EIF3A, EIF3B, EIF3G and EIF3I; module B is composed of EIF3F, EIF3H, and EIF3M; and module C is composed of EIF3C, EIF3D, EIF3E, EIF3K and EIF3L. EIF3C of module C binds EIF3B of module A and EIF3H of module B, thereby linking the three modules. EIF3J is a labile subunit that binds to the eIF-3 complex via EIF3B. The eIF-3 complex interacts with RPS6KB1 under conditions of nutrient depletion. Mitogenic stimulation leads to binding and activation of a complex composed of MTOR and RPTOR, leading to phosphorylation and release of RPS6KB1 and binding of EIF4B to eIF-3.

It is found in the cytoplasm. Functionally, component of the eukaryotic translation initiation factor 3 (eIF-3) complex, which is required for several steps in the initiation of protein synthesis. The eIF-3 complex associates with the 40S ribosome and facilitates the recruitment of eIF-1, eIF-1A, eIF-2:GTP:methionyl-tRNAi and eIF-5 to form the 43S pre-initiation complex (43S PIC). The eIF-3 complex stimulates mRNA recruitment to the 43S PIC and scanning of the mRNA for AUG recognition. The eIF-3 complex is also required for disassembly and recycling of post-termination ribosomal complexes and subsequently prevents premature joining of the 40S and 60S ribosomal subunits prior to initiation. The eIF-3 complex specifically targets and initiates translation of a subset of mRNAs involved in cell proliferation, including cell cycling, differentiation and apoptosis, and uses different modes of RNA stem-loop binding to exert either translational activation or repression. This Bos taurus (Bovine) protein is Eukaryotic translation initiation factor 3 subunit M.